The following is a 175-amino-acid chain: Probable DNA-directed RNA polymerase subunit delta (175 aa).

The HTH HARE-type domain occupies 14 to 81 (MALVEIAHEI…SDQTWGLRSW (68 aa)). A disordered region spans residues 110-175 (LDLDEFEEVD…YDDEEEDRKD (66 aa)).

It belongs to the RpoE family. RNAP is composed of a core of 2 alpha, a beta and a beta' subunits. The core is associated with a delta subunit and one of several sigma factors.

Participates in both the initiation and recycling phases of transcription. In the presence of the delta subunit, RNAP displays an increased specificity of transcription, a decreased affinity for nucleic acids, and an increased efficiency of RNA synthesis because of enhanced recycling. The sequence is that of Probable DNA-directed RNA polymerase subunit delta from Bacillus velezensis (strain DSM 23117 / BGSC 10A6 / LMG 26770 / FZB42) (Bacillus amyloliquefaciens subsp. plantarum).